The following is a 131-amino-acid chain: Large ribosomal subunit protein bL19 (131 aa).

This sequence belongs to the bacterial ribosomal protein bL19 family.

This protein is located at the 30S-50S ribosomal subunit interface and may play a role in the structure and function of the aminoacyl-tRNA binding site. The sequence is that of Large ribosomal subunit protein bL19 from Rhodopseudomonas palustris (strain BisA53).